An 87-amino-acid chain; its full sequence is U3-theraphotoxin-Hhn1i (87 aa).

Positions 1 to 24 (MVNMEASMFLTFAGLVLLFVVCYA) are cleaved as a signal peptide. Positions 25–52 (SESEEKEFPKEMLSSIFAVDNDFKQEER) are excised as a propeptide. Disulfide bonds link cysteine 54/cysteine 67, cysteine 61/cysteine 72, and cysteine 66/cysteine 79.

Belongs to the neurotoxin 10 (Hwtx-1) family. 51 (Hntx-8) subfamily. Hntx-8 sub-subfamily. As to expression, expressed by the venom gland.

The protein localises to the secreted. In terms of biological role, ion channel inhibitor. This chain is U3-theraphotoxin-Hhn1i, found in Cyriopagopus hainanus (Chinese bird spider).